A 223-amino-acid polypeptide reads, in one-letter code: Ribonuclease T (223 aa).

The Exonuclease domain maps to 20 to 194 (VVIDVETAGF…YDTNQTALLF (175 aa)). The Mg(2+) site is built by aspartate 23, glutamate 25, histidine 181, and aspartate 186. Catalysis depends on histidine 181, which acts as the Proton donor/acceptor.

It belongs to the RNase T family. Homodimer. Mg(2+) serves as cofactor.

In terms of biological role, trims short 3' overhangs of a variety of RNA species, leaving a one or two nucleotide 3' overhang. Responsible for the end-turnover of tRNA: specifically removes the terminal AMP residue from uncharged tRNA (tRNA-C-C-A). Also appears to be involved in tRNA biosynthesis. This Pectobacterium atrosepticum (strain SCRI 1043 / ATCC BAA-672) (Erwinia carotovora subsp. atroseptica) protein is Ribonuclease T.